Reading from the N-terminus, the 208-residue chain is Coat protein (208 aa).

The protein belongs to the potexvirus capsid protein family.

It is found in the virion. In terms of biological role, required for genome encapsidation. Forms ribonucleoprotein complexes along with TGB1 helicase and viral RNA. This is Coat protein from Trifolium (WCMV).